Here is a 413-residue protein sequence, read N- to C-terminus: Multifunctional CCA protein (413 aa).

ATP contacts are provided by Gly-8 and Arg-11. Gly-8 and Arg-11 together coordinate CTP. Mg(2+)-binding residues include Asp-21 and Asp-23. ATP is bound by residues Arg-91, Arg-137, and Arg-140. 3 residues coordinate CTP: Arg-91, Arg-137, and Arg-140. Positions 228 to 329 (TGVHTLMTLS…VKLFDAIDAW (102 aa)) constitute an HD domain.

The protein belongs to the tRNA nucleotidyltransferase/poly(A) polymerase family. Bacterial CCA-adding enzyme type 1 subfamily. In terms of assembly, monomer. Can also form homodimers and oligomers. Mg(2+) is required as a cofactor. The cofactor is Ni(2+).

The enzyme catalyses a tRNA precursor + 2 CTP + ATP = a tRNA with a 3' CCA end + 3 diphosphate. It carries out the reaction a tRNA with a 3' CCA end + 2 CTP + ATP = a tRNA with a 3' CCACCA end + 3 diphosphate. Catalyzes the addition and repair of the essential 3'-terminal CCA sequence in tRNAs without using a nucleic acid template. Adds these three nucleotides in the order of C, C, and A to the tRNA nucleotide-73, using CTP and ATP as substrates and producing inorganic pyrophosphate. tRNA 3'-terminal CCA addition is required both for tRNA processing and repair. Also involved in tRNA surveillance by mediating tandem CCA addition to generate a CCACCA at the 3' terminus of unstable tRNAs. While stable tRNAs receive only 3'-terminal CCA, unstable tRNAs are marked with CCACCA and rapidly degraded. This is Multifunctional CCA protein from Salmonella agona (strain SL483).